Reading from the N-terminus, the 300-residue chain is UPF0761 membrane protein Patl_3954 (300 aa).

The next 6 helical transmembrane spans lie at Leu46–Phe66, Met103–Asp123, Ile138–Leu158, Met184–Val204, Ala214–Phe234, and Ala248–Leu268.

This sequence belongs to the UPF0761 family.

It is found in the cell inner membrane. The chain is UPF0761 membrane protein Patl_3954 from Pseudoalteromonas atlantica (strain T6c / ATCC BAA-1087).